A 248-amino-acid chain; its full sequence is Mannose-binding protein C (248 aa).

The N-terminal stretch at 1 to 20 is a signal peptide; it reads MSLIPSLSLLLMSMVAASYS. The Collagen-like domain maps to 42-99; sequence GINGFPGKDGRDGTKGEKGEPGQGLRGLQGPPGKLGPPGNPGPSGSPGPKGQKGDPGK. A disordered region spans residues 43–107; it reads INGFPGKDGR…GKSPDCDSSL (65 aa). Residue proline 47 is modified to 4-hydroxyproline. The segment covering 49–61 has biased composition (basic and acidic residues); the sequence is KDGRDGTKGEKGE. A 4-hydroxyproline mark is found at proline 73, proline 79, proline 82, and proline 88. The span at 75–87 shows a compositional bias: pro residues; sequence KLGPPGNPGPSGS. Residues 93–102 show a composition bias toward basic and acidic residues; it reads QKGDPGKSPD. The stretch at 112–130 forms a coiled coil; it reads RKALQTEMARIKKWLTFSL. A C-type lectin domain is found at 134–245; the sequence is VGNKFFLTNG…CSSSHLAVCE (112 aa). 2 cysteine pairs are disulfide-bonded: cysteine 155–cysteine 244 and cysteine 222–cysteine 236.

Oligomeric complex of 3 or more homotrimers. Interacts with MASP1 and MASP2. Interacts with MEP1A and MEP1B and may inhibit their catalytic activity. Post-translationally, hydroxylation on proline residues within the sequence motif, GXPG, is most likely to be 4-hydroxy as this fits the requirement for 4-hydroxylation in vertebrates.

The protein resides in the secreted. Its function is as follows. Calcium-dependent lectin involved in innate immune defense. Binds mannose, fucose and N-acetylglucosamine on different microorganisms and activates the lectin complement pathway. Binds to late apoptotic cells, as well as to apoptotic blebs and to necrotic cells, but not to early apoptotic cells, facilitating their uptake by macrophages. The protein is Mannose-binding protein C (MBL2) of Hylobates lar (Lar gibbon).